Here is a 318-residue protein sequence, read N- to C-terminus: Adenylate isopentenyltransferase 4 (318 aa).

12–19 (GATGSGKS) lines the ATP pocket.

This sequence belongs to the IPP transferase family. The cofactor is Mg(2+). As to expression, expressed in immature seeds with highest expression in the chalazal endosperm.

The protein resides in the cytoplasm. The catalysed reaction is dimethylallyl diphosphate + ADP = N(6)-(dimethylallyl)adenosine 5'-diphosphate + diphosphate. The enzyme catalyses dimethylallyl diphosphate + ATP = N(6)-(dimethylallyl)adenosine 5'-triphosphate + diphosphate. Its function is as follows. Involved in cytokinin biosynthesis. Catalyzes the transfer of an isopentenyl group from dimethylallyl diphosphate (DMAPP) to ATP and ADP, but not to AMP. Has no DMAPP:tRNA isopentenyltransferase activity. The polypeptide is Adenylate isopentenyltransferase 4 (IPT4) (Arabidopsis thaliana (Mouse-ear cress)).